The primary structure comprises 941 residues: ATP-dependent 6-phosphofructokinase subunit beta (941 aa).

The tract at residues 2 to 558 (PDASLFNGTS…HMKNFISTNS (557 aa)) is N-terminal catalytic PFK domain 1. Residues G191, 255–256 (RC), and 285–288 (GDGS) contribute to the ATP site. D286 serves as a coordination point for Mg(2+). Residues 331-333 (SID), R368, 375-377 (MGR), E432, R460, and 466-469 (HVQR) contribute to the beta-D-fructose 6-phosphate site. D333 serves as the catalytic Proton acceptor. The tract at residues 559-572 (ADHVPPSLPLEKRK) is interdomain linker. Residues 573 to 941 (KVAIINVGAP…SDMLSGRTSL (369 aa)) form a C-terminal regulatory PFK domain 2 region. Beta-D-fructose 2,6-bisphosphate contacts are provided by residues R643, 701–705 (TISNN), R739, 746–748 (QGG), E806, K832, 838–841 (HVQQ), and R918.

The protein belongs to the phosphofructokinase type A (PFKA) family. ATP-dependent PFK group I subfamily. Eukaryotic two domain clade 'E' sub-subfamily. As to quaternary structure, heterododecamer of 4 alpha, 4 beta and 4 gamma chains. The gamma chain bridges the N-terminal halves of the alpha and beta subunits. The cofactor is Mg(2+).

It is found in the cytoplasm. It carries out the reaction beta-D-fructose 6-phosphate + ATP = beta-D-fructose 1,6-bisphosphate + ADP + H(+). Its pathway is carbohydrate degradation; glycolysis; D-glyceraldehyde 3-phosphate and glycerone phosphate from D-glucose: step 3/4. With respect to regulation, allosterically activated by ADP, AMP, or fructose 2,6-bisphosphate, and allosterically inhibited by ATP or citrate. Catalyzes the phosphorylation of D-fructose 6-phosphate to fructose 1,6-bisphosphate by ATP, the first committing step of glycolysis. This Komagataella phaffii (strain GS115 / ATCC 20864) (Yeast) protein is ATP-dependent 6-phosphofructokinase subunit beta (PFK2).